A 138-amino-acid chain; its full sequence is Putative pre-16S rRNA nuclease (138 aa).

The protein belongs to the YqgF nuclease family.

The protein resides in the cytoplasm. In terms of biological role, could be a nuclease involved in processing of the 5'-end of pre-16S rRNA. This is Putative pre-16S rRNA nuclease from Fusobacterium nucleatum subsp. nucleatum (strain ATCC 25586 / DSM 15643 / BCRC 10681 / CIP 101130 / JCM 8532 / KCTC 2640 / LMG 13131 / VPI 4355).